A 442-amino-acid polypeptide reads, in one-letter code: tRNA-2-methylthio-N(6)-dimethylallyladenosine synthase (442 aa).

The MTTase N-terminal domain occupies 2–117 (QGLYIKSYGC…LPELIIKARR (116 aa)). Residues cysteine 11, cysteine 47, cysteine 80, cysteine 157, cysteine 161, and cysteine 164 each contribute to the [4Fe-4S] cluster site. One can recognise a Radical SAM core domain in the interval 143–374 (KNQEVSAFIS…QELLREQQLA (232 aa)). The region spanning 377 to 442 (RNMIGQTCSV…QNSVTGIVVN (66 aa)) is the TRAM domain.

This sequence belongs to the methylthiotransferase family. MiaB subfamily. As to quaternary structure, monomer. The cofactor is [4Fe-4S] cluster.

Its subcellular location is the cytoplasm. It catalyses the reaction N(6)-dimethylallyladenosine(37) in tRNA + (sulfur carrier)-SH + AH2 + 2 S-adenosyl-L-methionine = 2-methylsulfanyl-N(6)-dimethylallyladenosine(37) in tRNA + (sulfur carrier)-H + 5'-deoxyadenosine + L-methionine + A + S-adenosyl-L-homocysteine + 2 H(+). Its function is as follows. Catalyzes the methylthiolation of N6-(dimethylallyl)adenosine (i(6)A), leading to the formation of 2-methylthio-N6-(dimethylallyl)adenosine (ms(2)i(6)A) at position 37 in tRNAs that read codons beginning with uridine. This chain is tRNA-2-methylthio-N(6)-dimethylallyladenosine synthase, found in Ehrlichia chaffeensis (strain ATCC CRL-10679 / Arkansas).